The primary structure comprises 354 residues: Release factor glutamine methyltransferase (354 aa).

Residues Gly-174–Gly-178, Asp-197, and Asn-241 contribute to the S-adenosyl-L-methionine site. Asn-241–Tyr-244 is a binding site for substrate.

This sequence belongs to the protein N5-glutamine methyltransferase family. PrmC subfamily.

It carries out the reaction L-glutaminyl-[peptide chain release factor] + S-adenosyl-L-methionine = N(5)-methyl-L-glutaminyl-[peptide chain release factor] + S-adenosyl-L-homocysteine + H(+). Methylates the class 1 translation termination release factors RF1/PrfA and RF2/PrfB on the glutamine residue of the universally conserved GGQ motif. This chain is Release factor glutamine methyltransferase, found in Fusobacterium nucleatum subsp. nucleatum (strain ATCC 25586 / DSM 15643 / BCRC 10681 / CIP 101130 / JCM 8532 / KCTC 2640 / LMG 13131 / VPI 4355).